Consider the following 178-residue polypeptide: Ribosome maturation factor RimP (178 aa).

The protein belongs to the RimP family.

It is found in the cytoplasm. Its function is as follows. Required for maturation of 30S ribosomal subunits. This is Ribosome maturation factor RimP from Streptococcus pyogenes serotype M4 (strain MGAS10750).